The sequence spans 89 residues: Elongation factor 1-beta (89 aa).

Belongs to the EF-1-beta/EF-1-delta family.

Functionally, promotes the exchange of GDP for GTP in EF-1-alpha/GDP, thus allowing the regeneration of EF-1-alpha/GTP that could then be used to form the ternary complex EF-1-alpha/GTP/AAtRNA. The polypeptide is Elongation factor 1-beta (Methanococcus aeolicus (strain ATCC BAA-1280 / DSM 17508 / OCM 812 / Nankai-3)).